Consider the following 326-residue polypeptide: 2-dehydropantoate 2-reductase (326 aa).

Residues 7-12 and Asn-103 contribute to the NADP(+) site; that span reads GAGAIG. A substrate-binding site is contributed by Asn-103. The Proton donor role is filled by Lys-205. 3 residues coordinate substrate: Asn-209, Asn-213, and Ser-274. Glu-286 is an NADP(+) binding site.

This sequence belongs to the ketopantoate reductase family.

It is found in the cytoplasm. It carries out the reaction (R)-pantoate + NADP(+) = 2-dehydropantoate + NADPH + H(+). The protein operates within cofactor biosynthesis; (R)-pantothenate biosynthesis; (R)-pantoate from 3-methyl-2-oxobutanoate: step 2/2. In terms of biological role, catalyzes the NADPH-dependent reduction of ketopantoate into pantoic acid. This chain is 2-dehydropantoate 2-reductase, found in Mesorhizobium japonicum (strain LMG 29417 / CECT 9101 / MAFF 303099) (Mesorhizobium loti (strain MAFF 303099)).